Consider the following 160-residue polypeptide: Transcriptional repressor NrdR (160 aa).

Residues 3-34 fold into a zinc finger; the sequence is CPFCGNADTQVVDSRVSEEGDTIRRRRRCLSC. The ATP-cone domain maps to 49-139; that stretch reads PSVVKRDGSR…VYKSFEDIGE (91 aa).

This sequence belongs to the NrdR family. Requires Zn(2+) as cofactor.

In terms of biological role, negatively regulates transcription of bacterial ribonucleotide reductase nrd genes and operons by binding to NrdR-boxes. This Bordetella bronchiseptica (strain ATCC BAA-588 / NCTC 13252 / RB50) (Alcaligenes bronchisepticus) protein is Transcriptional repressor NrdR.